A 171-amino-acid chain; its full sequence is Ly6/PLAUR domain-containing protein 6 (171 aa).

The signal sequence occupies residues 1 to 25; that stretch reads MEPSPALAWLLLLSLVADCLKAAQS. The UPAR/Ly6 domain occupies 47 to 141; sequence FKCFTCEKAA…PRNDTDATFA (95 aa). Intrachain disulfides connect cysteine 49–cysteine 77, cysteine 52–cysteine 61, cysteine 70–cysteine 96, cysteine 102–cysteine 121, cysteine 107–cysteine 118, and cysteine 122–cysteine 127. A NxI motif motif is present at residues 88 to 90; that stretch reads NSI. N-linked (GlcNAc...) asparagine glycosylation is found at asparagine 134 and asparagine 147. Asparagine 147 carries GPI-anchor amidated asparagine lipidation. Positions 148–171 are cleaved as a propeptide — removed in mature form; it reads QTNGHPHCVSVIVSCLWVWLGLTL.

In terms of assembly, interacts with nicotinic acetylcholine receptors (nAChRs) including CHRNA3, CHRNA4, CHRNA5, CHRNA6, CHRNA7, CHRNB2 and CHRNB4. Interacts (via NxI motif) with LRP6. As to expression, expressed at high levels in the cortex and cerebellum of the brain, at moderate levels in the lung, kidney, and liver, and at low levels in the heart and prostate (at protein level). Expressed in neurons (at protein level).

It localises to the secreted. Its subcellular location is the cytoplasm. The protein resides in the cell membrane. The protein localises to the synapse. It is found in the synaptosome. It localises to the membrane raft. Its subcellular location is the cell projection. The protein resides in the dendrite. The protein localises to the perikaryon. Acts as a modulator of nicotinic acetylcholine receptors (nAChRs) function in the brain. Inhibits nicotine-induced Ca(2+) influx through nAChRs. In vitro, specifically inhibits alpha-3:beta-4 and alpha-7 nAChR currents in an allosteric manner. Acts as a positive regulator of Wnt/beta-catenin signaling. This is Ly6/PLAUR domain-containing protein 6 (Lypd6) from Rattus norvegicus (Rat).